Reading from the N-terminus, the 321-residue chain is Serpentine receptor class delta-63 (321 aa).

Transmembrane regions (helical) follow at residues 14–34 (LVYMICLMLYITMYILIYNFT), 41–61 (VKYFLYPSCTAMLIAMTMAFA), 83–103 (YIGPTFCFYCYNLYTAFGIVV), 128–148 (LWTLVFMWHYLCPLIYLIVII), 190–208 (AAMSLSLISMYYPLIGTYW), 240–260 (NFQILLPMLRYIPLTAIYFMI), and 273–293 (TITVLGTIPCILDPLVQIYFI).

The protein belongs to the nematode receptor-like protein srd family.

It localises to the membrane. In Caenorhabditis elegans, this protein is Serpentine receptor class delta-63 (srd-63).